The chain runs to 164 residues: Vesiculogenesis and immune response regulator (164 aa).

In terms of processing, could be O-mannosylated. Is likely mannosylated on Thr-61 when overexpressed in M.smegmatis.

It is found in the cell inner membrane. Its subcellular location is the cytoplasm. Its function is as follows. Virulence factor that regulates vesiculogenesis. Acts by regulating the production of mycobacterial membrane vesicles (MV) bearing Toll-like receptor 2 (TLR2) ligands, including the lipoproteins LpqH, a major host TLR2 agonist, and SodC. By restraining the release of most of the material that activates host cells through TLR2, VirR reduces the immunostimulant potential of M.tuberculosis and increases its virulence. May contribute to cell envelope integrity. When overexpressed in M.smegmatis, it modulates the production of IL-10, IL-12 p40 and TNF-alpha by RAW264.7 macrophages and it decreases the killing of M.smegmatis. The polypeptide is Vesiculogenesis and immune response regulator (Mycobacterium tuberculosis (strain ATCC 25618 / H37Rv)).